Here is a 407-residue protein sequence, read N- to C-terminus: Protein ZNF365 (407 aa).

S16 carries the post-translational modification Phosphoserine. The C2H2-type; degenerate zinc finger occupies 26–51 (LRCPRCGDHTRFRSLSSLRAHLEFSH). S138 bears the Phosphoserine mark. A coiled-coil region spans residues 169–297 (VEAVDRTIEK…QLEYYQSQQA (129 aa)). Position 175 is a phosphothreonine (T175). Residues 347–392 (LKKAKDDRASMQPAKAIHEQAESSRDLCRPPKKGELLGFGRKGNIR) are disordered. Over residues 362–381 (AIHEQAESSRDLCRPPKKGE) the composition is skewed to basic and acidic residues. S369 bears the Phosphoserine mark.

As to quaternary structure, homodimer. Interacts with NDE1 and NDEL1. Does not interact with TUBG1. Interacts with DISC1. Interacts with PARP1. Interacts with MCRS1. Isoform 1 is expressed in brain. Isoform 2 is expressed in placenta and at low level in lung and liver. Isoform 3 is expressed in kidney and pancreas. Isoform 1 is expressed exclusively in brain.

It is found in the cytoplasm. The protein localises to the cytoskeleton. Its subcellular location is the microtubule organizing center. The protein resides in the centrosome. Its function is as follows. Involved in the regulation of neurogenesis. Negatively regulates neurite outgrowth. Involved in the morphogenesis of basket cells in the somatosensory cortex during embryogenesis. Involved in the positive regulation of oligodendrocyte differentiation during postnatal growth. Involved in dendritic arborization, morphogenesis of spine density dendrite, and establishment of postsynaptic dendrite density in cortical pyramidal neurons. Involved in homologous recombination (HR) repair pathway. Required for proper resolution of DNA double-strand breaks (DSBs) by HR. Is required for recovery of stalled replication forks, and directly contributes to genomic stability. Interacts with PARP1 and mediates MRE11-dependent DNA end resection during replication fork recovery. Contributes to genomic stability by preventing telomere dysfunction. The sequence is that of Protein ZNF365 (ZNF365) from Homo sapiens (Human).